We begin with the raw amino-acid sequence, 211 residues long: Thymidylate kinase (211 aa).

10–17 contacts ATP; that stretch reads GGDGVGKS.

Belongs to the thymidylate kinase family.

It catalyses the reaction dTMP + ATP = dTDP + ADP. In terms of biological role, phosphorylation of dTMP to form dTDP in both de novo and salvage pathways of dTTP synthesis. The sequence is that of Thymidylate kinase from Clavibacter sepedonicus (Clavibacter michiganensis subsp. sepedonicus).